A 495-amino-acid polypeptide reads, in one-letter code: Siroheme synthase 2 (495 aa).

Residues 1–205 (MDHYPIFLNL…GREREAEQAM (205 aa)) are precorrin-2 dehydrogenase /sirohydrochlorin ferrochelatase. NAD(+) is bound by residues 22-23 (ET) and 43-44 (PD). Ser130 bears the Phosphoserine mark. The uroporphyrinogen-III C-methyltransferase stretch occupies residues 220–495 (GEVYLVGAGP…HPAPADTEQA (276 aa)). Residue Pro229 coordinates S-adenosyl-L-methionine. Asp252 acts as the Proton acceptor in catalysis. The active-site Proton donor is the Lys274. S-adenosyl-L-methionine contacts are provided by residues 305–307 (GGD), Ile310, 335–336 (TA), Met387, and Ala416. The tract at residues 471–495 (FPEHGCLRGEPRPTRHPAPADTEQA) is disordered.

The protein in the N-terminal section; belongs to the precorrin-2 dehydrogenase / sirohydrochlorin ferrochelatase family. This sequence in the C-terminal section; belongs to the precorrin methyltransferase family.

It carries out the reaction uroporphyrinogen III + 2 S-adenosyl-L-methionine = precorrin-2 + 2 S-adenosyl-L-homocysteine + H(+). The enzyme catalyses precorrin-2 + NAD(+) = sirohydrochlorin + NADH + 2 H(+). It catalyses the reaction siroheme + 2 H(+) = sirohydrochlorin + Fe(2+). Its pathway is cofactor biosynthesis; adenosylcobalamin biosynthesis; precorrin-2 from uroporphyrinogen III: step 1/1. It participates in cofactor biosynthesis; adenosylcobalamin biosynthesis; sirohydrochlorin from precorrin-2: step 1/1. The protein operates within porphyrin-containing compound metabolism; siroheme biosynthesis; precorrin-2 from uroporphyrinogen III: step 1/1. It functions in the pathway porphyrin-containing compound metabolism; siroheme biosynthesis; siroheme from sirohydrochlorin: step 1/1. Its pathway is porphyrin-containing compound metabolism; siroheme biosynthesis; sirohydrochlorin from precorrin-2: step 1/1. Its function is as follows. Multifunctional enzyme that catalyzes the SAM-dependent methylations of uroporphyrinogen III at position C-2 and C-7 to form precorrin-2 via precorrin-1. Then it catalyzes the NAD-dependent ring dehydrogenation of precorrin-2 to yield sirohydrochlorin. Finally, it catalyzes the ferrochelation of sirohydrochlorin to yield siroheme. The polypeptide is Siroheme synthase 2 (Halorhodospira halophila (strain DSM 244 / SL1) (Ectothiorhodospira halophila (strain DSM 244 / SL1))).